A 640-amino-acid chain; its full sequence is 1-deoxy-D-xylulose-5-phosphate synthase (640 aa).

Residues histidine 79 and 120–122 contribute to the thiamine diphosphate site; that span reads GHS. Residue aspartate 151 coordinates Mg(2+). Residues 152–153, asparagine 180, tyrosine 288, and glutamate 372 contribute to the thiamine diphosphate site; that span reads GG. A Mg(2+)-binding site is contributed by asparagine 180.

This sequence belongs to the transketolase family. DXPS subfamily. As to quaternary structure, homodimer. The cofactor is Mg(2+). Thiamine diphosphate is required as a cofactor.

It catalyses the reaction D-glyceraldehyde 3-phosphate + pyruvate + H(+) = 1-deoxy-D-xylulose 5-phosphate + CO2. Its pathway is metabolic intermediate biosynthesis; 1-deoxy-D-xylulose 5-phosphate biosynthesis; 1-deoxy-D-xylulose 5-phosphate from D-glyceraldehyde 3-phosphate and pyruvate: step 1/1. Catalyzes the acyloin condensation reaction between C atoms 2 and 3 of pyruvate and glyceraldehyde 3-phosphate to yield 1-deoxy-D-xylulose-5-phosphate (DXP). This chain is 1-deoxy-D-xylulose-5-phosphate synthase, found in Nitrosococcus oceani (strain ATCC 19707 / BCRC 17464 / JCM 30415 / NCIMB 11848 / C-107).